We begin with the raw amino-acid sequence, 164 residues long: Putative F-box protein At1g59675 (164 aa).

The 48-residue stretch at 9–56 folds into the F-box domain; sequence SQSDHVPLDLTIEILSRLPAKSVGRFRSVSKLWSANTTSQNFINSFAT.

This Arabidopsis thaliana (Mouse-ear cress) protein is Putative F-box protein At1g59675.